We begin with the raw amino-acid sequence, 207 residues long: dITP/XTP pyrophosphatase (207 aa).

A substrate-binding site is contributed by 16–21 (SNNKGK). Catalysis depends on aspartate 79, which acts as the Proton acceptor. Residue aspartate 79 coordinates Mg(2+). Substrate-binding positions include serine 80, 166-169 (FGYD), lysine 189, and 194-195 (HR).

Belongs to the HAM1 NTPase family. Homodimer. Requires Mg(2+) as cofactor.

It carries out the reaction XTP + H2O = XMP + diphosphate + H(+). The catalysed reaction is dITP + H2O = dIMP + diphosphate + H(+). The enzyme catalyses ITP + H2O = IMP + diphosphate + H(+). Pyrophosphatase that catalyzes the hydrolysis of nucleoside triphosphates to their monophosphate derivatives, with a high preference for the non-canonical purine nucleotides XTP (xanthosine triphosphate), dITP (deoxyinosine triphosphate) and ITP. Seems to function as a house-cleaning enzyme that removes non-canonical purine nucleotides from the nucleotide pool, thus preventing their incorporation into DNA/RNA and avoiding chromosomal lesions. This chain is dITP/XTP pyrophosphatase, found in Acinetobacter baumannii (strain ATCC 17978 / DSM 105126 / CIP 53.77 / LMG 1025 / NCDC KC755 / 5377).